A 105-amino-acid chain; its full sequence is Biogenesis of lysosome-related organelles complex 1 subunit SNN1 (105 aa).

Residues 70 to 105 (WKDDNERLDSLRKRVDSLKSRFQSLKLRSDKLEQRE) adopt a coiled-coil conformation.

This sequence belongs to the SNAPIN family. In terms of assembly, component of the biogenesis of lysosome-related organelles complex-1 (BLOC-1).

Its subcellular location is the endosome. Functionally, component of the biogenesis of lysosome-related organelles complex-1 (BLOC-1), a complex involved in endosomal cargo sorting. The chain is Biogenesis of lysosome-related organelles complex 1 subunit SNN1 (SNN1) from Zygosaccharomyces rouxii (strain ATCC 2623 / CBS 732 / NBRC 1130 / NCYC 568 / NRRL Y-229).